The following is a 1890-amino-acid chain: Putative aminopeptidase-2 (1890 aa).

A signal peptide spans 1-20 (MRRKLLLLLCFIGLFSLIST). N-linked (GlcNAc...) asparagine glycosylation occurs at Asn-110. Substrate is bound by residues Glu-220 and 354–358 (GAMEN). His-390 serves as a coordination point for Zn(2+). The Proton acceptor role is filled by Glu-391. The Zn(2+) site is built by His-394 and Glu-413. Asn-534, Asn-581, Asn-785, Asn-803, Asn-914, Asn-1024, and Asn-1094 each carry an N-linked (GlcNAc...) asparagine glycan. Substrate is bound at residue Glu-1143. An N-linked (GlcNAc...) asparagine glycan is attached at Asn-1245. 1280 to 1284 (GAMEN) lines the substrate pocket. His-1316 lines the Zn(2+) pocket. Glu-1317 (proton acceptor) is an active-site residue. Residues His-1320 and Glu-1339 each contribute to the Zn(2+) site. Residues Asn-1451, Asn-1521, Asn-1826, and Asn-1841 are each glycosylated (N-linked (GlcNAc...) asparagine).

It belongs to the peptidase M1 family. It depends on Zn(2+) as a cofactor.

Its function is as follows. Putative aminopeptidase which plays a role in oocyte maturation. The sequence is that of Putative aminopeptidase-2 from Caenorhabditis elegans.